The chain runs to 181 residues: Adenine phosphoribosyltransferase (181 aa).

The protein belongs to the purine/pyrimidine phosphoribosyltransferase family. In terms of assembly, homodimer.

Its subcellular location is the cytoplasm. It carries out the reaction AMP + diphosphate = 5-phospho-alpha-D-ribose 1-diphosphate + adenine. The protein operates within purine metabolism; AMP biosynthesis via salvage pathway; AMP from adenine: step 1/1. In terms of biological role, catalyzes a salvage reaction resulting in the formation of AMP, that is energically less costly than de novo synthesis. The chain is Adenine phosphoribosyltransferase from Rhodopseudomonas palustris (strain BisB5).